The chain runs to 361 residues: MGIEESQICNPSDREFLSVDILNIVTSSLSLMGSALTIISYIWKKVRRHRIQKQQIQQQQQQIEKGGLLSSSITIGNGSSHYGGIGGGGGSGNGTGIGAIGGPHGTYKQPTSKLPLLIFMLSIADFFTSFFIIISQSYLINNSKSYSTPYSPDLKIHFSPCIILRAIIQFFFLSTFFWTTCISYYLFHQLSSPGEEKYLLAIFNVVSWGIPFAISMVITMTNSIVVNSDGWCEVAKPMELSLWFLPLFLCLLVCSIYYFRLRRLFRSKFEYRLQINDRLKQLDSTISRRLTLYIVVFVICWLPDVIQHFISFFSKCTFFPLLILQNILTPSQGFWNFWIYSYTNKIARFTPSNDENKRLLQ.

The Extracellular segment spans residues 1–18; sequence MGIEESQICNPSDREFLS. Residues 19 to 39 traverse the membrane as a helical segment; it reads VDILNIVTSSLSLMGSALTII. The Cytoplasmic portion of the chain corresponds to 40–113; the sequence is SYIWKKVRRH…HGTYKQPTSK (74 aa). Residues 114–134 form a helical membrane-spanning segment; sequence LPLLIFMLSIADFFTSFFIII. Over 135–166 the chain is Extracellular; the sequence is SQSYLINNSKSYSTPYSPDLKIHFSPCIILRA. The chain crosses the membrane as a helical span at residues 167-187; it reads IIQFFFLSTFFWTTCISYYLF. The Cytoplasmic segment spans residues 188–197; the sequence is HQLSSPGEEK. A helical membrane pass occupies residues 198–218; the sequence is YLLAIFNVVSWGIPFAISMVI. Residues 219 to 238 are Extracellular-facing; sequence TMTNSIVVNSDGWCEVAKPM. The chain crosses the membrane as a helical span at residues 239–259; sequence ELSLWFLPLFLCLLVCSIYYF. Over 260 to 292 the chain is Cytoplasmic; that stretch reads RLRRLFRSKFEYRLQINDRLKQLDSTISRRLTL. Residues 293–313 traverse the membrane as a helical segment; that stretch reads YIVVFVICWLPDVIQHFISFF. Topologically, residues 314-318 are extracellular; it reads SKCTF. A helical transmembrane segment spans residues 319 to 339; sequence FPLLILQNILTPSQGFWNFWI. Residues 340-361 lie on the Cytoplasmic side of the membrane; that stretch reads YSYTNKIARFTPSNDENKRLLQ.

The protein belongs to the G-protein coupled receptor 5 family.

It localises to the membrane. Receptor for cAMP. The sequence is that of Cyclic AMP receptor-like protein C (crlC) from Dictyostelium discoideum (Social amoeba).